Here is a 75-residue protein sequence, read N- to C-terminus: MSDVVSVRVKPGSKKGPLVETGPDGELTVYVRERAVDGKANAAVIRVLAEHFGVPRSLVELTGGASSRIKRFRIG.

The protein belongs to the UPF0235 family.

The sequence is that of UPF0235 protein Mvan_2846 from Mycolicibacterium vanbaalenii (strain DSM 7251 / JCM 13017 / BCRC 16820 / KCTC 9966 / NRRL B-24157 / PYR-1) (Mycobacterium vanbaalenii).